We begin with the raw amino-acid sequence, 644 residues long: Sodium/hydrogen exchanger 9 (644 aa).

Residues 1–20 (MAGQLRFTSGKDEDHFQHQG) lie on the Lumenal side of the membrane. Residues 21–41 (AVELLAFNFLLILTILTIWLF) form a helical membrane-spanning segment. The Cytoplasmic portion of the chain corresponds to 42 to 45 (KNHR). A helical membrane pass occupies residues 46–66 (FRFLHETGGAMVYGLIMGLIL). Topologically, residues 67-126 (RYATAPTDIDSGTVYNCGNLFFSPSTLLVNITDQVYEYKYQREINQHNISPHQGNAILEK) are lumenal. The chain crosses the membrane as a helical span at residues 127–147 (MTFDPEIFFNVLLPPIIFHAG). Residues 148-164 (YSLKKRHFFQNLGSILT) lie on the Cytoplasmic side of the membrane. Residues 165-185 (YAFLGTAISCVVIGLIMYGFV) form a helical membrane-spanning segment. Topologically, residues 186–203 (KAMVHAGQLKSGDFHFTD) are lumenal. A helical membrane pass occupies residues 204-224 (CLFFGSLMSATDPVTVLAIFH). Topologically, residues 225-235 (ELHVDPDLYTL) are cytoplasmic. The chain crosses the membrane as a helical span at residues 236 to 256 (LFGESVLNDAVAIVLTYSISI). The Lumenal segment spans residues 257-277 (YSPKENPNAFDTAAFFQSVGN). Residues 278–298 (FLGIFAGSFAMGSAYAVVTAL) traverse the membrane as a helical segment. Residues 299–309 (LTKFTKLREFP) are Cytoplasmic-facing. Residues 310 to 327 (MLETGLFFLLSWSAFLSA) form a helical membrane-spanning segment. Over 328 to 333 (EAAGLT) the chain is Lumenal. A helical membrane pass occupies residues 334–350 (GIVAVLFCGVTQAHYTY). Residues 351-364 (NNLSSDSKLRTKQL) lie on the Cytoplasmic side of the membrane. A helical transmembrane segment spans residues 365–385 (FEFMNFLAENVIFCYMGLALF). A topological domain (lumenal) is located at residue Thr386. Residues 387–407 (FQNHIFNALFILGAFLAIFVA) form a helical membrane-spanning segment. Topologically, residues 408–429 (RACNIYPLSFLLNLGRKQKIPW) are cytoplasmic. A helical transmembrane segment spans residues 430–450 (NFQHMMMFSGLRGAIAFALAI). Topologically, residues 451 to 465 (RNTESQPKQMMFTTT) are lumenal. The chain crosses the membrane as a helical span at residues 466–486 (LLLVFFTVWVFGGGTTPMLTW). Over 487 to 644 (LQIRVGVDLD…EQTRGQPQMD (158 aa)) the chain is Cytoplasmic. Residues 590-644 (YQEQSPSPSSPTTKLALDQKSSGQTPGKENIYEGDLGLGGYDLKLEQTRGQPQMD) form a disordered region.

This sequence belongs to the monovalent cation:proton antiporter 1 (CPA1) transporter (TC 2.A.36) family. Homodimer; phosphatidylinositol-4,5-bisphosphate (PIP2) and phosphatidylinositol 3,4,5-trisphosphate (PIP3) could be involved in the dimer stabilization. Interacts (via the C-terminus) with RACK1. Interacts with CHP1. As to expression, expressed in the brain. Highly expressed in immune cells, specifically macrophages.

The protein localises to the late endosome membrane. It localises to the cell membrane. It is found in the early endosome membrane. The protein resides in the recycling endosome membrane. Its subcellular location is the cytoplasmic vesicle. The protein localises to the phagosome membrane. The enzyme catalyses Na(+)(in) + H(+)(out) = Na(+)(out) + H(+)(in). It carries out the reaction K(+)(in) + H(+)(out) = K(+)(out) + H(+)(in). Endosomal Na(+), K(+)/H(+) antiporter. Mediates the electroneutral exchange of endosomal luminal H(+) for a cytosolic Na(+) or K(+). By facilitating proton efflux, SLC9A9 counteracts the acidity generated by vacuolar (V)-ATPase, thereby limiting luminal acidification. Regulates organellar pH and consequently, endosome maturation and endocytic trafficking of plasma membrane receptors and neurotransporters. Promotes the recycling of transferrin receptors back to the cell surface to facilitate additional iron uptake in the brain. Regulates synaptic transmission by regulating the luminal pH of axonal endosomes. Regulates phagosome lumenal pH, thus affecting phagosome maturation, and consequently, microbicidal activity in macrophages. Can also be active at the cell surface of specialized cells, e.g., in the inner ear hair bundles uses the high K(+) of the endolymph to regulate intracelular pH. This chain is Sodium/hydrogen exchanger 9 (Slc9a9), found in Mus musculus (Mouse).